The chain runs to 37 residues: Large ribosomal subunit protein bL36c (37 aa).

This sequence belongs to the bacterial ribosomal protein bL36 family.

The protein localises to the plastid. Its subcellular location is the chloroplast. This is Large ribosomal subunit protein bL36c from Phaseolus angularis (Azuki bean).